A 98-amino-acid chain; its full sequence is Ig heavy chain V region 6.96 (98 aa).

In terms of domain architecture, Ig-like spans Glu-1–Arg-98.

This is Ig heavy chain V region 6.96 from Mus musculus (Mouse).